A 188-amino-acid polypeptide reads, in one-letter code: Elongation factor P (188 aa).

This sequence belongs to the elongation factor P family.

It localises to the cytoplasm. It participates in protein biosynthesis; polypeptide chain elongation. In terms of biological role, involved in peptide bond synthesis. Stimulates efficient translation and peptide-bond synthesis on native or reconstituted 70S ribosomes in vitro. Probably functions indirectly by altering the affinity of the ribosome for aminoacyl-tRNA, thus increasing their reactivity as acceptors for peptidyl transferase. This is Elongation factor P from Phocaeicola vulgatus (strain ATCC 8482 / DSM 1447 / JCM 5826 / CCUG 4940 / NBRC 14291 / NCTC 11154) (Bacteroides vulgatus).